A 179-amino-acid chain; its full sequence is Ribosome maturation factor RimM (179 aa).

One can recognise a PRC barrel domain in the interval 98–170 (PDEFWDRRLR…RIVVSGIPGL (73 aa)).

This sequence belongs to the RimM family. As to quaternary structure, binds ribosomal protein uS19.

It is found in the cytoplasm. In terms of biological role, an accessory protein needed during the final step in the assembly of 30S ribosomal subunit, possibly for assembly of the head region. Essential for efficient processing of 16S rRNA. May be needed both before and after RbfA during the maturation of 16S rRNA. It has affinity for free ribosomal 30S subunits but not for 70S ribosomes. The chain is Ribosome maturation factor RimM from Cutibacterium acnes (strain DSM 16379 / KPA171202) (Propionibacterium acnes).